The following is a 338-amino-acid chain: Anthranilate phosphoribosyltransferase (338 aa).

Residues Gly78, 81–82 (GD), Ser86, 88–91 (NIST), 106–114 (KHGNKSITS), and Ser118 contribute to the 5-phospho-alpha-D-ribose 1-diphosphate site. Gly78 contacts anthranilate. Mg(2+) is bound at residue Ser90. Asn109 is a binding site for anthranilate. Arg163 contributes to the anthranilate binding site. The Mg(2+) site is built by Asp222 and Glu223.

Belongs to the anthranilate phosphoribosyltransferase family. In terms of assembly, homodimer. It depends on Mg(2+) as a cofactor.

The enzyme catalyses N-(5-phospho-beta-D-ribosyl)anthranilate + diphosphate = 5-phospho-alpha-D-ribose 1-diphosphate + anthranilate. The protein operates within amino-acid biosynthesis; L-tryptophan biosynthesis; L-tryptophan from chorismate: step 2/5. Functionally, catalyzes the transfer of the phosphoribosyl group of 5-phosphorylribose-1-pyrophosphate (PRPP) to anthranilate to yield N-(5'-phosphoribosyl)-anthranilate (PRA). This is Anthranilate phosphoribosyltransferase from Staphylococcus carnosus (strain TM300).